A 316-amino-acid polypeptide reads, in one-letter code: Phospho-N-acetylmuramoyl-pentapeptide-transferase (316 aa).

A run of 10 helical transmembrane segments spans residues Ile-5–Pro-25, Gly-49–Phe-69, Leu-76–Leu-96, Phe-116–Phe-136, Thr-141–Val-161, Gly-172–Leu-192, Ile-195–Leu-212, Ile-221–Leu-241, Leu-244–Ile-264, and Val-296–Ser-316.

The protein belongs to the glycosyltransferase 4 family. MraY subfamily. Mg(2+) is required as a cofactor.

The protein localises to the cell membrane. It catalyses the reaction UDP-N-acetyl-alpha-D-muramoyl-L-alanyl-gamma-D-glutamyl-meso-2,6-diaminopimeloyl-D-alanyl-D-alanine + di-trans,octa-cis-undecaprenyl phosphate = di-trans,octa-cis-undecaprenyl diphospho-N-acetyl-alpha-D-muramoyl-L-alanyl-D-glutamyl-meso-2,6-diaminopimeloyl-D-alanyl-D-alanine + UMP. It participates in cell wall biogenesis; peptidoglycan biosynthesis. Functionally, catalyzes the initial step of the lipid cycle reactions in the biosynthesis of the cell wall peptidoglycan: transfers peptidoglycan precursor phospho-MurNAc-pentapeptide from UDP-MurNAc-pentapeptide onto the lipid carrier undecaprenyl phosphate, yielding undecaprenyl-pyrophosphoryl-MurNAc-pentapeptide, known as lipid I. The polypeptide is Phospho-N-acetylmuramoyl-pentapeptide-transferase (Thermoanaerobacter pseudethanolicus (strain ATCC 33223 / 39E) (Clostridium thermohydrosulfuricum)).